We begin with the raw amino-acid sequence, 271 residues long: Formamidopyrimidine-DNA glycosylase (271 aa).

Pro-2 serves as the catalytic Schiff-base intermediate with DNA. Glu-3 (proton donor) is an active-site residue. The active-site Proton donor; for beta-elimination activity is Lys-58. DNA contacts are provided by His-91, Arg-110, and Arg-152. The FPG-type zinc-finger motif lies at 237-271 (RVYGRTGLACMACETPVKQIVQGNRSTYYCPACQR). Arg-261 functions as the Proton donor; for delta-elimination activity in the catalytic mechanism.

Belongs to the FPG family. As to quaternary structure, monomer. Zn(2+) serves as cofactor.

The enzyme catalyses Hydrolysis of DNA containing ring-opened 7-methylguanine residues, releasing 2,6-diamino-4-hydroxy-5-(N-methyl)formamidopyrimidine.. It catalyses the reaction 2'-deoxyribonucleotide-(2'-deoxyribose 5'-phosphate)-2'-deoxyribonucleotide-DNA = a 3'-end 2'-deoxyribonucleotide-(2,3-dehydro-2,3-deoxyribose 5'-phosphate)-DNA + a 5'-end 5'-phospho-2'-deoxyribonucleoside-DNA + H(+). In terms of biological role, involved in base excision repair of DNA damaged by oxidation or by mutagenic agents. Acts as a DNA glycosylase that recognizes and removes damaged bases. Has a preference for oxidized purines, such as 7,8-dihydro-8-oxoguanine (8-oxoG). Has AP (apurinic/apyrimidinic) lyase activity and introduces nicks in the DNA strand. Cleaves the DNA backbone by beta-delta elimination to generate a single-strand break at the site of the removed base with both 3'- and 5'-phosphates. In Thioalkalivibrio sulfidiphilus (strain HL-EbGR7), this protein is Formamidopyrimidine-DNA glycosylase.